Here is a 1489-residue protein sequence, read N- to C-terminus: DEAD-box ATP-dependent DNA helicase Fancm (1489 aa).

Residues 65 to 237 (IVQSALFKNT…AVCRNLYISN (173 aa)) enclose the Helicase ATP-binding domain. ATP is bound at residue 78-85 (LPTGLGKT). The DEAH box motif lies at 185 to 188 (DEAH). In terms of domain architecture, Helicase C-terminal spans 418–584 (KLRQVLVQHF…VVKLSLYEQN (167 aa)). Disordered regions lie at residues 591-647 (KFQP…ESQQ), 980-1000 (VEESQRSTPISIADSSGESNH), 1145-1182 (TETIKNSENKNSHEDGSRTVSPDIFGSDSMSPLKPQGK), 1196-1222 (VLPCPPPNSVGLNSPENRKRTNPSIQE), 1255-1293 (NPTISVPKDEEDSPIARRPSKRKIVISSDEEEEQKPQIA), and 1452-1489 (ERRKQRRLGKVPSAPVNKRRRLQTISTSSDEDDVVLID). Residues 594-610 (PKCEEKHMEPVAEEKPK) show a composition bias toward basic and acidic residues. The segment covering 611–625 (PKSAAKTKESRKRKQ) has biased composition (basic residues). Residues 985–998 (RSTPISIADSSGES) are compositionally biased toward polar residues. Over residues 1149-1161 (KNSENKNSHEDGS) the composition is skewed to basic and acidic residues. Acidic residues predominate over residues 1480–1489 (SDEDDVVLID).

The protein belongs to the DEAD box helicase family. DEAH subfamily. FANCM sub-subfamily.

It localises to the nucleus. It catalyses the reaction ATP + H2O = ADP + phosphate + H(+). The catalysed reaction is Couples ATP hydrolysis with the unwinding of duplex DNA by translocating in the 3'-5' direction.. In terms of biological role, a ssDNA-dependent ATPase with 3' to 5' helicase activity. Involved in multiple DNA-damage responses, some that require ATPase and helicase activity and some that are independent of these. Involved in DNA interstrand cross-link repair, probably together with Fancl and other Fanconi anemia pathway homologs. Independent of Fancl involved in DNA double strand break repair, including contributing to the synthesis-dependent strand annealing (SDSA) pathway. Probably contributes to SDSA by unwinding short duplex regions in complex D-loop-like DNA structures. The protein is DEAD-box ATP-dependent DNA helicase Fancm of Drosophila melanogaster (Fruit fly).